A 344-amino-acid polypeptide reads, in one-letter code: Putative voltage-gated potassium channel subunit beta (344 aa).

The NADP(+) site is built by Trp-33, Asp-62, Tyr-67, Ser-167, Gln-193, Trp-222, Ser-223, Pro-224, Leu-225, Lys-233, Arg-243, Gly-301, Ser-303, Gln-307, Glu-310, and Asn-311. Tyr-67 (proton donor/acceptor) is an active-site residue.

Belongs to the shaker potassium channel beta subunit family. In terms of assembly, forms heteromultimeric complexes with potassium channel alpha subunits.

Its subcellular location is the cytoplasm. It is found in the nucleus. Probable accessory potassium channel protein which modulates the activity of the pore-forming alpha subunit. The sequence is that of Putative voltage-gated potassium channel subunit beta from Schizosaccharomyces pombe (strain 972 / ATCC 24843) (Fission yeast).